A 357-amino-acid chain; its full sequence is MANNFTTPLATSHGNNCDLYAHHSTARVLMPLHYSLVFIIGLVGNLLALVVIVQNRKKINSTTLYSMNLVISDILFTTALPTRIAYYALGFDWRIGDALCRVTALVFYINTYAGVNFMTCLSIDRFFAVVHPLRYNKIKRIEYAKGVCLSVWILVFAQTLPLLLTPMSKEEGDKTTCMEYPNFEGTASLPWILLGACLLGYVLPITVILLCYSQICCKLFRTAKQNPLTEKSGVNKKALNTIILIIVVFILCFTPYHVAIIQHMIKMLCSPGALECGARHSFQISLHFTVCLMNFNCCMDPFIYFFACKGYKRKVMKMLKRQVSVSISSAVRSAPEENSREMTESQMMIHSKASNGR.

Residues 1–27 (MANNFTTPLATSHGNNCDLYAHHSTAR) are Extracellular-facing. A glycan (N-linked (GlcNAc...) asparagine) is linked at Asn-4. A helical membrane pass occupies residues 28-53 (VLMPLHYSLVFIIGLVGNLLALVVIV). Residues 54–73 (QNRKKINSTTLYSMNLVISD) lie on the Cytoplasmic side of the membrane. Residues 74 to 91 (ILFTTALPTRIAYYALGF) traverse the membrane as a helical segment. Arg-83 lines the 7alpha,25-dihydroxycholesterol pocket. The Extracellular portion of the chain corresponds to 92 to 101 (DWRIGDALCR). Cys-100 and Cys-177 are disulfide-bonded. Residues 102-123 (VTALVFYINTYAGVNFMTCLSI) form a helical membrane-spanning segment. Positions 108 and 112 each coordinate 7alpha,25-dihydroxycholesterol. The segment at 122–130 (SIDRFFAVV) is interaction with G proteins. The Cytoplasmic segment spans residues 124–145 (DRFFAVVHPLRYNKIKRIEYAK). Residues 146 to 164 (GVCLSVWILVFAQTLPLLL) traverse the membrane as a helical segment. At 165-188 (TPMSKEEGDKTTCMEYPNFEGTAS) the chain is on the extracellular side. Residues 189–211 (LPWILLGACLLGYVLPITVILLC) form a helical membrane-spanning segment. Residues 212 to 237 (YSQICCKLFRTAKQNPLTEKSGVNKK) lie on the Cytoplasmic side of the membrane. Residues 238–261 (ALNTIILIIVVFILCFTPYHVAII) traverse the membrane as a helical segment. Position 256 (Tyr-256) interacts with 7alpha,25-dihydroxycholesterol. Over 262–283 (QHMIKMLCSPGALECGARHSFQ) the chain is Extracellular. Residues 284–308 (ISLHFTVCLMNFNCCMDPFIYFFAC) form a helical membrane-spanning segment. Topologically, residues 309 to 357 (KGYKRKVMKMLKRQVSVSISSAVRSAPEENSREMTESQMMIHSKASNGR) are cytoplasmic. A phosphoserine mark is found at Ser-324 and Ser-345. The segment at 336–357 (EENSREMTESQMMIHSKASNGR) is disordered. A compositionally biased stretch (polar residues) spans 344–357 (ESQMMIHSKASNGR).

It belongs to the G-protein coupled receptor 1 family. As to quaternary structure, homodimer and heterodimer. Heterodimerizes with CXCR5; leading to modulate the interaction between of CXCL13 and CXCR5. As to expression, expressed in mature B-cells and increases in expression early after activation, before being down-regulated in germinal center B-cells. Expressed in astrocytes. Specifically expressed in CD4(+) dendritic cells but not in CD8(+) dendritic cells. Expressed in monocyte/osteoclasts precursors and mature osteoclasts.

The protein resides in the cell membrane. Its function is as follows. G-protein coupled receptor expressed in lymphocytes that acts as a chemotactic receptor for B-cells, T-cells, splenic dendritic cells, monocytes/macrophages and astrocytes. Receptor for oxysterol 7-alpha,25-dihydroxycholesterol (7-alpha,25-OHC) and other related oxysterols. Mediates cell positioning and movement of a number of cells by binding the 7-alpha,25-OHC ligand that forms a chemotactic gradient. Binding of 7-alpha,25-OHC mediates the correct localization of B-cells during humoral immune responses. Collaborates with CXCR5 to mediate B-cell migration; probably by forming a heterodimer with CXCR5 that affects the interaction between of CXCL13 and CXCR5. Guides B-cell movement along the B-cell zone-T-cell zone boundary and later to interfollicular and outer follicular regions. Its specific expression during B-cell maturation helps position B-cells appropriately for mounting T-dependent antibody responses. Also acts as a chemotactic receptor for some T-cells upon binding to 7-alpha,25-OHC ligand. Promotes follicular helper T (Tfh) cells differentiation by positioning activated T-cells at the follicle-T-zone interface, promoting contact of newly activated CD4 T-cells with activated dendritic cells and exposing them to Tfh-cell-promoting inducible costimulator (ICOS) ligand. Expression in splenic dendritic cells is required for their homeostasis, localization and ability to induce B- and T-cell responses: GPR183 acts as a chemotactic receptor in dendritic cells that mediates the accumulation of CD4(+) dendritic cells in bridging channels. Regulates migration of astrocytes and is involved in communication between astrocytes and macrophages. Promotes osteoclast precursor migration to bone surfaces. Signals constitutively through G(i)-alpha, but not G(s)-alpha or G(q)-alpha. Signals constitutively also via MAPK1/3 (ERK1/2). The polypeptide is G-protein coupled receptor 183 (Mus musculus (Mouse)).